A 481-amino-acid chain; its full sequence is Pre-mRNA-splicing factor sap114 (481 aa).

Over residues 1–15 the composition is skewed to polar residues; that stretch reads MSSLMEFQDRNTTNN. The segment at 1–34 is disordered; it reads MSSLMEFQDRNTTNNETEHQKSITDQSSSVPAGV. 2 SURP motif repeats span residues 44 to 86 and 147 to 189; these read IIDK…HPYY and VLRL…YPYF. Disordered regions lie at residues 335–373 and 452–481; these read PSLA…QKPV and GVEI…NKRR. Composition is skewed to polar residues over residues 345–368 and 467–481; these read ISST…TQPK and ATQS…NKRR.

Belongs to the 40S cdc5-associated complex (or cwf complex), a spliceosome sub-complex reminiscent of a late-stage spliceosome composed of the U2, U5 and U6 snRNAs and at least brr2, cdc5, cwf2/prp3, cwf3/syf1, cwf4/syf3, cwf5/ecm2, spp42/cwf6, cwf7/spf27, cwf8, cwf9, cwf10, cwf11, cwf12, prp45/cwf13, cwf14, cwf15, cwf16, cwf17, cwf18, cwf19, cwf20, cwf21, cwf22, cwf23, cwf24, cwf25, cwf26, cyp7/cwf27, cwf28, cwf29/ist3, lea1, msl1, prp5/cwf1, prp10, prp12/sap130, prp17, prp22, sap61, sap62, sap114, sap145, slu7, smb1, smd1, smd3, smf1, smg1 and syf2.

It localises to the nucleus. In terms of biological role, involved in pre-mRNA splicing. May be involved in endoplasmic reticulum-associated protein degradation (ERAD) and required for growth at low and high temperatures. This Schizosaccharomyces pombe (strain 972 / ATCC 24843) (Fission yeast) protein is Pre-mRNA-splicing factor sap114 (sap114).